We begin with the raw amino-acid sequence, 345 residues long: Protein RecA (345 aa).

66–73 (GPESSGKT) contacts ATP.

Belongs to the RecA family.

It is found in the cytoplasm. Its function is as follows. Can catalyze the hydrolysis of ATP in the presence of single-stranded DNA, the ATP-dependent uptake of single-stranded DNA by duplex DNA, and the ATP-dependent hybridization of homologous single-stranded DNAs. It interacts with LexA causing its activation and leading to its autocatalytic cleavage. This Helicobacter hepaticus (strain ATCC 51449 / 3B1) protein is Protein RecA.